The primary structure comprises 156 residues: Cyanate hydratase (156 aa).

Residues Arg96, Glu99, and Ser122 contribute to the active site.

This sequence belongs to the cyanase family.

The catalysed reaction is cyanate + hydrogencarbonate + 3 H(+) = NH4(+) + 2 CO2. Functionally, catalyzes the reaction of cyanate with bicarbonate to produce ammonia and carbon dioxide. The sequence is that of Cyanate hydratase from Escherichia coli (strain ATCC 8739 / DSM 1576 / NBRC 3972 / NCIMB 8545 / WDCM 00012 / Crooks).